We begin with the raw amino-acid sequence, 509 residues long: ATP synthase subunit alpha (509 aa).

Residue 169–176 coordinates ATP; the sequence is GDRQTGKT.

This sequence belongs to the ATPase alpha/beta chains family. As to quaternary structure, F-type ATPases have 2 components, CF(1) - the catalytic core - and CF(0) - the membrane proton channel. CF(1) has five subunits: alpha(3), beta(3), gamma(1), delta(1), epsilon(1). CF(0) has three main subunits: a(1), b(2) and c(9-12). The alpha and beta chains form an alternating ring which encloses part of the gamma chain. CF(1) is attached to CF(0) by a central stalk formed by the gamma and epsilon chains, while a peripheral stalk is formed by the delta and b chains.

It localises to the cell inner membrane. It catalyses the reaction ATP + H2O + 4 H(+)(in) = ADP + phosphate + 5 H(+)(out). Functionally, produces ATP from ADP in the presence of a proton gradient across the membrane. The alpha chain is a regulatory subunit. In Rhizobium johnstonii (strain DSM 114642 / LMG 32736 / 3841) (Rhizobium leguminosarum bv. viciae), this protein is ATP synthase subunit alpha.